Consider the following 261-residue polypeptide: Hemin import ATP-binding protein HmuV (261 aa).

In terms of domain architecture, ABC transporter spans 7–243; sequence LRGQNLSLQF…EIIDAVYGYK (237 aa). 39–46 is a binding site for ATP; the sequence is GPNGAGKS.

Belongs to the ABC transporter superfamily. Heme (hemin) importer (TC 3.A.1.14.5) family. As to quaternary structure, the complex is composed of two ATP-binding proteins (HmuV), two transmembrane proteins (HmuU) and a solute-binding protein (HmuT).

Its subcellular location is the cell inner membrane. Part of the ABC transporter complex HmuTUV involved in hemin import. Responsible for energy coupling to the transport system. This is Hemin import ATP-binding protein HmuV from Vibrio vulnificus (strain CMCP6).